Here is a 620-residue protein sequence, read N- to C-terminus: Chaperone protein HscA homolog (620 aa).

It belongs to the heat shock protein 70 family.

Functionally, chaperone involved in the maturation of iron-sulfur cluster-containing proteins. Has a low intrinsic ATPase activity which is markedly stimulated by HscB. The sequence is that of Chaperone protein HscA homolog from Herminiimonas arsenicoxydans.